The primary structure comprises 246 residues: NH(3)-dependent NAD(+) synthetase (246 aa).

29-36 (GLSGGIDS) serves as a coordination point for ATP. Position 35 (D35) interacts with Mg(2+). Residue R110 coordinates deamido-NAD(+). T130 contributes to the ATP binding site. E135 lines the Mg(2+) pocket. K159 and S181 together coordinate ATP.

The protein belongs to the NAD synthetase family. As to quaternary structure, homodimer.

It carries out the reaction deamido-NAD(+) + NH4(+) + ATP = AMP + diphosphate + NAD(+) + H(+). It participates in cofactor biosynthesis; NAD(+) biosynthesis; NAD(+) from deamido-NAD(+) (ammonia route): step 1/1. In terms of biological role, catalyzes the ATP-dependent amidation of deamido-NAD to form NAD. Uses ammonia as a nitrogen source. This is NH(3)-dependent NAD(+) synthetase from Campylobacter jejuni subsp. jejuni serotype O:23/36 (strain 81-176).